We begin with the raw amino-acid sequence, 502 residues long: Protein DETOXIFICATION 7 (502 aa).

Transmembrane regions (helical) follow at residues 36-56 (MAAP…ISMV), 68-88 (AVAI…VGFA), 112-132 (YSSM…WFFM), 143-163 (PLIS…LFGF), 182-202 (LFVS…LLVY), 208-228 (IVGA…LLWI), 262-282 (AMMI…SGLL), 291-311 (VISI…AIGA), 331-351 (AAVN…TITL), 375-395 (ITPI…LSGV), 408-428 (ASLG…CFVM), and 436-456 (WIGI…VTFF).

The protein belongs to the multi antimicrobial extrusion (MATE) (TC 2.A.66.1) family.

It is found in the membrane. This is Protein DETOXIFICATION 7 from Arabidopsis thaliana (Mouse-ear cress).